Consider the following 343-residue polypeptide: Anthranilate phosphoribosyltransferase (343 aa).

5-phospho-alpha-D-ribose 1-diphosphate contacts are provided by residues Gly86, Gly89 to Asp90, Thr94, Asn96 to Thr99, Lys114 to Gly122, and Ser126. Gly86 contributes to the anthranilate binding site. Ser98 contacts Mg(2+). Asn117 contacts anthranilate. Position 172 (Arg172) interacts with anthranilate. Mg(2+)-binding residues include Asp231 and Glu232.

Belongs to the anthranilate phosphoribosyltransferase family. In terms of assembly, homodimer. Requires Mg(2+) as cofactor.

It carries out the reaction N-(5-phospho-beta-D-ribosyl)anthranilate + diphosphate = 5-phospho-alpha-D-ribose 1-diphosphate + anthranilate. The protein operates within amino-acid biosynthesis; L-tryptophan biosynthesis; L-tryptophan from chorismate: step 2/5. Catalyzes the transfer of the phosphoribosyl group of 5-phosphorylribose-1-pyrophosphate (PRPP) to anthranilate to yield N-(5'-phosphoribosyl)-anthranilate (PRA). The chain is Anthranilate phosphoribosyltransferase from Prochlorococcus marinus subsp. pastoris (strain CCMP1986 / NIES-2087 / MED4).